Here is a 926-residue protein sequence, read N- to C-terminus: Beta-mannosidase A (926 aa).

The signal sequence occupies residues 1 to 21 (MHVKAETVLALLTPAPPSVVG). Residues asparagine 40, asparagine 242, asparagine 277, asparagine 311, and asparagine 342 are each glycosylated (N-linked (GlcNAc...) asparagine). Catalysis depends on glutamate 474, which acts as the Proton donor. Residues asparagine 532, asparagine 603, asparagine 626, asparagine 653, asparagine 733, asparagine 756, asparagine 785, asparagine 793, asparagine 819, and asparagine 905 are each glycosylated (N-linked (GlcNAc...) asparagine).

This sequence belongs to the glycosyl hydrolase 2 family. Beta-mannosidase A subfamily. As to quaternary structure, homodimer.

The protein localises to the secreted. It catalyses the reaction Hydrolysis of terminal, non-reducing beta-D-mannose residues in beta-D-mannosides.. It functions in the pathway glycan metabolism; N-glycan degradation. In terms of biological role, exoglycosidase that cleaves the single beta-linked mannose residue from the non-reducing end of beta-mannosidic oligosaccharides of various complexity and length. Involved in the degradation of polymeric mannan and galactomannan. This is Beta-mannosidase A (mndA) from Aspergillus fumigatus (strain ATCC MYA-4609 / CBS 101355 / FGSC A1100 / Af293) (Neosartorya fumigata).